The primary structure comprises 617 residues: Probable LRR receptor-like serine/threonine-protein kinase RKF3 (617 aa).

A signal peptide spans 1–20; sequence MLFLRRIAVVFFVFTSFSAA. Over 21–212 the chain is Extracellular; the sequence is QNSTCPLDFS…PTSSGANKVK (192 aa). N22, N124, N135, and N165 each carry an N-linked (GlcNAc...) asparagine glycan. Residues 213-233 traverse the membrane as a helical segment; sequence VLVSSFSVLLVASVLVITAWF. Residues 234-617 lie on the Cytoplasmic side of the membrane; it reads WYCRRKKSKL…DGPSGNTNTT (384 aa). The Protein kinase domain maps to 283–563; it reads FSRHNIIGRG…VKMLESNEFT (281 aa). ATP is bound by residues 289–297 and K311; that span reads IGRGGYGNV. D412 (proton acceptor) is an active-site residue. The segment at 585-617 is disordered; it reads VSSSSGSGKLTSPTGYQAFSFGGDGPSGNTNTT.

The protein belongs to the protein kinase superfamily. Ser/Thr protein kinase family. As to expression, expressed in the whole plant at low levels.

The protein localises to the cell membrane. The catalysed reaction is L-seryl-[protein] + ATP = O-phospho-L-seryl-[protein] + ADP + H(+). It catalyses the reaction L-threonyl-[protein] + ATP = O-phospho-L-threonyl-[protein] + ADP + H(+). The sequence is that of Probable LRR receptor-like serine/threonine-protein kinase RKF3 (RKF3) from Arabidopsis thaliana (Mouse-ear cress).